Consider the following 160-residue polypeptide: Eukaryotic translation initiation factor 5A (160 aa).

Over residues 1–10 (MSDDDHHFES) the composition is skewed to basic and acidic residues. The segment at 1–23 (MSDDDHHFESSADAGASKTYPQQ) is disordered. Lysine 52 is subject to Hypusine.

It belongs to the eIF-5A family. Post-translationally, lys-52 undergoes hypusination, a unique post-translational modification that consists in the addition of a butylamino group from spermidine to lysine side chain, leading to the formation of the unusual amino acid hypusine. eIF-5As are the only known proteins to undergo this modification, which is essential for their function.

Functionally, translation factor that promotes translation elongation and termination, particularly upon ribosome stalling at specific amino acid sequence contexts. Binds between the exit (E) and peptidyl (P) site of the ribosome and promotes rescue of stalled ribosome: specifically required for efficient translation of polyproline-containing peptides as well as other motifs that stall the ribosome. Acts as a ribosome quality control (RQC) cofactor by joining the RQC complex to facilitate peptidyl transfer during CAT tailing step. In Dianthus caryophyllus (Carnation), this protein is Eukaryotic translation initiation factor 5A.